The primary structure comprises 144 residues: Large ribosomal subunit protein uL15 (144 aa).

Residues 1 to 48 form a disordered region; sequence MIKLESLQDPSPRKRRTKLLGRGPSSGHGKTSCRGHKGDGSRSGYKRR.

The protein belongs to the universal ribosomal protein uL15 family. In terms of assembly, part of the 50S ribosomal subunit.

Functionally, binds to the 23S rRNA. The sequence is that of Large ribosomal subunit protein uL15 from Chlamydia abortus (strain DSM 27085 / S26/3) (Chlamydophila abortus).